The following is a 342-amino-acid chain: Methionyl-tRNA formyltransferase (342 aa).

Residue 108 to 111 (SLLP) participates in (6S)-5,6,7,8-tetrahydrofolate binding.

It belongs to the Fmt family.

The catalysed reaction is L-methionyl-tRNA(fMet) + (6R)-10-formyltetrahydrofolate = N-formyl-L-methionyl-tRNA(fMet) + (6S)-5,6,7,8-tetrahydrofolate + H(+). Its function is as follows. Attaches a formyl group to the free amino group of methionyl-tRNA(fMet). The formyl group appears to play a dual role in the initiator identity of N-formylmethionyl-tRNA by promoting its recognition by IF2 and preventing the misappropriation of this tRNA by the elongation apparatus. This chain is Methionyl-tRNA formyltransferase, found in Prochlorococcus marinus (strain MIT 9303).